A 197-amino-acid chain; its full sequence is Large ribosomal subunit protein uL10 (197 aa).

Residues 163-197 are disordered; the sequence is GAPAAAEAPAAEESADSAAEAAAEAPAEAPAAEEN.

This sequence belongs to the universal ribosomal protein uL10 family. Part of the ribosomal stalk of the 50S ribosomal subunit. The N-terminus interacts with L11 and the large rRNA to form the base of the stalk. The C-terminus forms an elongated spine to which L12 dimers bind in a sequential fashion forming a multimeric L10(L12)X complex.

Forms part of the ribosomal stalk, playing a central role in the interaction of the ribosome with GTP-bound translation factors. This Pseudarthrobacter chlorophenolicus (strain ATCC 700700 / DSM 12829 / CIP 107037 / JCM 12360 / KCTC 9906 / NCIMB 13794 / A6) (Arthrobacter chlorophenolicus) protein is Large ribosomal subunit protein uL10.